The following is a 528-amino-acid chain: Peptide chain release factor 3 (528 aa).

A tr-type G domain is found at 10-280 (AKRRTFGIIS…IDMAPAPGPR (271 aa)). Residues 19–26 (SHPDAGKT), 87–91 (DTPGH), and 141–144 (NKLD) each bind GTP.

Belongs to the TRAFAC class translation factor GTPase superfamily. Classic translation factor GTPase family. PrfC subfamily.

Its subcellular location is the cytoplasm. Its function is as follows. Increases the formation of ribosomal termination complexes and stimulates activities of RF-1 and RF-2. It binds guanine nucleotides and has strong preference for UGA stop codons. It may interact directly with the ribosome. The stimulation of RF-1 and RF-2 is significantly reduced by GTP and GDP, but not by GMP. The polypeptide is Peptide chain release factor 3 (Desulfotalea psychrophila (strain LSv54 / DSM 12343)).